The chain runs to 285 residues: Shikimate dehydrogenase (NADP(+)) (285 aa).

Residues 20 to 22 (SRS) and T67 contribute to the shikimate site. K71 (proton acceptor) is an active-site residue. 2 residues coordinate shikimate: N93 and D108. Residues 132–136 (GAGGA) and M224 each bind NADP(+). Residue Y226 participates in shikimate binding. Position 248 (G248) interacts with NADP(+).

It belongs to the shikimate dehydrogenase family. Homodimer.

It catalyses the reaction shikimate + NADP(+) = 3-dehydroshikimate + NADPH + H(+). Its pathway is metabolic intermediate biosynthesis; chorismate biosynthesis; chorismate from D-erythrose 4-phosphate and phosphoenolpyruvate: step 4/7. Functionally, involved in the biosynthesis of the chorismate, which leads to the biosynthesis of aromatic amino acids. Catalyzes the reversible NADPH linked reduction of 3-dehydroshikimate (DHSA) to yield shikimate (SA). This Bordetella avium (strain 197N) protein is Shikimate dehydrogenase (NADP(+)).